A 774-amino-acid polypeptide reads, in one-letter code: E3 ubiquitin-protein ligase UHRF1 (774 aa).

The Ubiquitin-like domain maps to 1–78 (MWIQVRTMDG…IQLLVRQSLA (78 aa)). Phosphoserine is present on residues serine 76, serine 91, serine 93, serine 95, and serine 161. The segment at 83–120 (TKERDSELSDSDSGYGVGHSESDKSSTHGEGTADGDDK) is disordered. Tudor-like regions lie at residues 129–205 (GLYK…ARAR) and 212–280 (DLEV…IELP). Residue lysine 276 forms a Glycyl lysine isopeptide (Lys-Gly) (interchain with G-Cter in SUMO2) linkage. Serine 284 is subject to Phosphoserine. Positions 293-298 (RKSGPS) are linker. At serine 295 the chain carries Phosphoserine; by PKA. The PHD-type zinc-finger motif lies at 296–363 (GPSCQYCKDD…EWYCPSCRTD (68 aa)). Histone H3R2me0 binding stretches follow at residues 330–334 (CDECD) and 350–352 (PPE). The residue at position 365 (serine 365) is a Phosphoserine. A Glycyl lysine isopeptide (Lys-Gly) (interchain with G-Cter in SUMO2) cross-link involves residue lysine 382. The interval 382–605 (KMASATSSSR…QLGLTMQYPE (224 aa)) is methyl-CpG binding and interaction with HDAC1. Lysine 396 bears the N6-acetyllysine mark. The YDG domain maps to 416–578 (GPIPGVPVGT…FIVWRYLLRR (163 aa)). The tract at residues 442 to 443 (HV) is required to promote base flipping. DNA-binding positions include 460–461 (AG) and aspartate 466. Required for formation of a 5-methylcytosine-binding pocket stretches follow at residues 463–466 (YEDD) and 475–478 (YTGS). A Phosphoserine modification is found at serine 511. An N6-acetyllysine; alternate modification is found at lysine 542. Residue lysine 542 forms a Glycyl lysine isopeptide (Lys-Gly) (interchain with G-Cter in SUMO2); alternate linkage. A disordered region spans residues 616–657 (KNRKRPAKALEQGPSSSKIGKSKRKSTGPATTSPRVSKKSKL). Position 631 is a phosphoserine; by CDK1 (serine 631). Phosphoserine occurs at positions 641 and 648. Lysine 656 participates in a covalent cross-link: Glycyl lysine isopeptide (Lys-Gly) (interchain with G-Cter in SUMO2). The RING-type zinc finger occupies 705 to 744 (CICCQELVFRPVTTVCQHNVCKDCLDRSFRAQVFSCPACR). Residue serine 751 is modified to Phosphoserine.

Interacts with DNMT3A and DNMT3B. Interacts with DNMT1; the interaction is direct. Interacts with USP7; leading to its deubiquitination. Interacts with histone H3. Interacts with HDAC1, but not with HDAC2. Interacts with BLTP3A. Interacts with PML. Interacts with EHMT2. Binds methylated CpG containing oligonucleotides. Interacts with ZNF263; recruited to the SIX3 promoter along with other proteins involved in chromatin modification and transcriptional corepression where it contributes to transcriptional repression. Interacts with UHRF2. Interacts with FANCD2. Interacts with TET1 isoform 2; this interaction induces the recruitment of TET1 isoform 2 to replicating heterochromatin. Phosphorylation at Ser-295 of the linker region decreases the binding to H3K9me3. Phosphorylation at Ser-631 by CDK1 during M phase impairs interaction with USP7, preventing deubiquitination and leading to degradation by the proteasome. In terms of processing, ubiquitinated; which leads to proteasomal degradation. Autoubiquitinated; interaction with USP7 leads to deubiquitination and prevents degradation. Ubiquitination and degradation takes place during M phase, when phosphorylation at Ser-631 prevents interaction with USP7 and subsequent deubiquitination. Polyubiquitination may be stimulated by DNA damage.

The protein localises to the nucleus. It carries out the reaction S-ubiquitinyl-[E2 ubiquitin-conjugating enzyme]-L-cysteine + [acceptor protein]-L-lysine = [E2 ubiquitin-conjugating enzyme]-L-cysteine + N(6)-ubiquitinyl-[acceptor protein]-L-lysine.. It participates in protein modification; protein ubiquitination. Functionally, multidomain protein that acts as a key epigenetic regulator by bridging DNA methylation and chromatin modification. Specifically recognizes and binds hemimethylated DNA at replication forks via its YDG domain and recruits DNMT1 methyltransferase to ensure faithful propagation of the DNA methylation patterns through DNA replication. In addition to its role in maintenance of DNA methylation, also plays a key role in chromatin modification: through its tudor-like regions and PHD-type zinc fingers, specifically recognizes and binds histone H3 trimethylated at 'Lys-9' (H3K9me3) and unmethylated at 'Arg-2' (H3R2me0), respectively, and recruits chromatin proteins. Enriched in pericentric heterochromatin where it recruits different chromatin modifiers required for this chromatin replication. Also localizes to euchromatic regions where it negatively regulates transcription possibly by impacting DNA methylation and histone modifications. Has E3 ubiquitin-protein ligase activity by mediating the ubiquitination of target proteins such as histone H3 and PML. It is still unclear how E3 ubiquitin-protein ligase activity is related to its role in chromatin in vivo. Plays a role in DNA repair by cooperating with UHRF2 to ensure recruitment of FANCD2 to interstrand cross-links (ICLs) leading to FANCD2 activation. Plays a pivotal role in the establishment of correct spindle architecture by catalyzing the 'Lys-63'-linked ubiquitination of KIF11, thereby controlling KIF11 localization on the spindle. The polypeptide is E3 ubiquitin-protein ligase UHRF1 (Uhrf1) (Rattus norvegicus (Rat)).